The chain runs to 610 residues: Calcium-dependent protein kinase 1 (610 aa).

Gly2 is lipidated: N-myristoyl glycine. Cys5 is lipidated: S-palmitoyl cysteine. The disordered stretch occupies residues 17 to 133 (VSAAMWRPRD…HMKRVSSAGL (117 aa)). Basic and acidic residues-rich tracts occupy residues 47 to 56 (LRSRLSDEVQ) and 70 to 117 (TDVE…DPPA). Residues 118–127 (KPKKPKHMKR) are compositionally biased toward basic residues. One can recognise a Protein kinase domain in the interval 150–408 (YSLGRKLGQG…AHQVLCHPWV (259 aa)). ATP contacts are provided by residues 156 to 164 (LGQGQFGTT) and Lys179. The Proton acceptor role is filled by Asp274. A Phosphoserine modification is found at Ser314. Residues 414 to 444 (APDKPLDSAVLSRMKQFSAMNKFKKMALRVI) form an autoinhibitory domain region. EF-hand domains are found at residues 451–486 (EEIA…VGAN), 487–522 (LKES…LNKI), 523–558 (ERED…FGVE), and 559–592 (DVRI…GSIT). 20 residues coordinate Ca(2+): Asp464, Asp466, Ser468, Gln470, Glu475, Asp500, Asp502, Ser504, Thr506, Glu511, Asp536, Asp538, Ser540, Tyr542, Glu547, Asp570, Asp572, Asp574, Arg576, and Glu581.

This sequence belongs to the protein kinase superfamily. Ser/Thr protein kinase family. CDPK subfamily. As to quaternary structure, interacts with 14-3-3 proteins.

The protein resides in the peroxisome membrane. The catalysed reaction is L-seryl-[protein] + ATP = O-phospho-L-seryl-[protein] + ADP + H(+). It carries out the reaction L-threonyl-[protein] + ATP = O-phospho-L-threonyl-[protein] + ADP + H(+). Its activity is regulated as follows. Activated by calcium. Autophosphorylation may play an important role in the regulation of the kinase activity. May play a role in signal transduction pathways that involve calcium as a second messenger. Phosphorylates the Ca(2+)-ATPase ACA2 resulting in the inhibition of its calcium activation. In Arabidopsis thaliana (Mouse-ear cress), this protein is Calcium-dependent protein kinase 1 (CPK1).